The sequence spans 185 residues: Crossover junction endodeoxyribonuclease RuvC (185 aa).

Residues aspartate 7, glutamate 68, and aspartate 141 contribute to the active site. Residues aspartate 7, glutamate 68, and aspartate 141 each coordinate Mg(2+).

The protein belongs to the RuvC family. In terms of assembly, homodimer which binds Holliday junction (HJ) DNA. The HJ becomes 2-fold symmetrical on binding to RuvC with unstacked arms; it has a different conformation from HJ DNA in complex with RuvA. In the full resolvosome a probable DNA-RuvA(4)-RuvB(12)-RuvC(2) complex forms which resolves the HJ. It depends on Mg(2+) as a cofactor.

It is found in the cytoplasm. It carries out the reaction Endonucleolytic cleavage at a junction such as a reciprocal single-stranded crossover between two homologous DNA duplexes (Holliday junction).. Its function is as follows. The RuvA-RuvB-RuvC complex processes Holliday junction (HJ) DNA during genetic recombination and DNA repair. Endonuclease that resolves HJ intermediates. Cleaves cruciform DNA by making single-stranded nicks across the HJ at symmetrical positions within the homologous arms, yielding a 5'-phosphate and a 3'-hydroxyl group; requires a central core of homology in the junction. The consensus cleavage sequence is 5'-(A/T)TT(C/G)-3'. Cleavage occurs on the 3'-side of the TT dinucleotide at the point of strand exchange. HJ branch migration catalyzed by RuvA-RuvB allows RuvC to scan DNA until it finds its consensus sequence, where it cleaves and resolves the cruciform DNA. The polypeptide is Crossover junction endodeoxyribonuclease RuvC (Helicobacter hepaticus (strain ATCC 51449 / 3B1)).